The chain runs to 99 residues: Acylphosphatase-1 (99 aa).

Residue Ala-2 is modified to N-acetylalanine. The Acylphosphatase-like domain occupies 9–99 (SVDYEIFGKV…LDYSDFQIVK (91 aa)). Active-site residues include Arg-24 and Asn-42.

It belongs to the acylphosphatase family.

The enzyme catalyses an acyl phosphate + H2O = a carboxylate + phosphate + H(+). This Mus musculus (Mouse) protein is Acylphosphatase-1 (Acyp1).